A 777-amino-acid polypeptide reads, in one-letter code: UPF0313 protein VP1980 (777 aa).

The Radical SAM core domain maps to 363–642 (AYDMIKTSVN…KALLRYHDPA (280 aa)). The [4Fe-4S] cluster site is built by C377, C381, and C384. Residues 675 to 777 (AQTPAQRRKS…PAGQRKPKRR (103 aa)) form a disordered region. Over residues 680-698 (QRRKSGRHGANRFATKHTK) the composition is skewed to basic residues. The segment covering 709 to 719 (KRAEGGSKDGK) has biased composition (basic and acidic residues). A compositionally biased stretch (polar residues) spans 736-747 (PASNGQRPSGNG). Positions 755 to 769 (KPQGQGRPQGQGKPA) are enriched in low complexity.

This sequence belongs to the UPF0313 family. [4Fe-4S] cluster is required as a cofactor.

The chain is UPF0313 protein VP1980 from Vibrio parahaemolyticus serotype O3:K6 (strain RIMD 2210633).